Here is a 118-residue protein sequence, read N- to C-terminus: Acidic phospholipase A2 (118 aa).

Ca(2+) contacts are provided by tyrosine 25, glycine 27, and glycine 29. Histidine 45 is a catalytic residue. Aspartate 46 is a Ca(2+) binding site. Aspartate 86 is an active-site residue.

This sequence belongs to the phospholipase A2 family. Group II subfamily. D49 sub-subfamily. Ca(2+) serves as cofactor. Post-translationally, six disulfide bonds are present. In terms of tissue distribution, expressed by the venom gland.

The protein localises to the secreted. It catalyses the reaction a 1,2-diacyl-sn-glycero-3-phosphocholine + H2O = a 1-acyl-sn-glycero-3-phosphocholine + a fatty acid + H(+). PLA2 catalyzes the calcium-dependent hydrolysis of the 2-acyl groups in 3-sn-phosphoglycerides. The polypeptide is Acidic phospholipase A2 (Bitis gabonica (Gaboon adder)).